The following is a 243-amino-acid chain: Zwei Ig domain protein zig-6 (243 aa).

An N-terminal signal peptide occupies residues 1-20; the sequence is MTKLCLLLLPLVFLVSYSFA. Ig-like C2-type domains lie at 30–118 and 133–212; these read PNAN…MDVI and GQVL…KTVT. C47 and C102 form a disulfide bridge. Residues N91 and N142 are each glycosylated (N-linked (GlcNAc...) asparagine). A disulfide bond links C145 and C196.

In terms of tissue distribution, expressed in head and tail body wall muscles.

It localises to the secreted. In terms of biological role, probably not involved in maintaining the position of ASI and ASH head neuron cell bodies and ventral nerve cord axons of PVQ, PVP, RMEV, AVK and HSN neurons. The sequence is that of Zwei Ig domain protein zig-6 from Caenorhabditis elegans.